Consider the following 120-residue polypeptide: GATA transcription factor 23 (120 aa).

Residues 22–76 (KGTIRCCSECKTTKTPMWRGGPTGPKSLCNACGIRHRKQRRSELLGIHIIRSHKS) form a GATA-type zinc finger.

It belongs to the type IV zinc-finger family. Class B subfamily.

It localises to the nucleus. Its function is as follows. Transcriptional regulator that specifically binds 5'-GATA-3' or 5'-GAT-3' motifs within gene promoters. This Arabidopsis thaliana (Mouse-ear cress) protein is GATA transcription factor 23 (GATA23).